The primary structure comprises 403 residues: F-box protein At1g60400 (403 aa).

Residues 13-59 (IDRLSALPEHLLCRILSELSTKDSVRTSVLSKHWRNLWLHVPVLELE) form the F-box domain.

The chain is F-box protein At1g60400 from Arabidopsis thaliana (Mouse-ear cress).